The following is a 78-amino-acid chain: DNA gyrase inhibitor YacG (78 aa).

4 residues coordinate Zn(2+): Cys7, Cys10, Cys26, and Cys30.

It belongs to the DNA gyrase inhibitor YacG family. Interacts with GyrB. It depends on Zn(2+) as a cofactor.

Inhibits all the catalytic activities of DNA gyrase by preventing its interaction with DNA. Acts by binding directly to the C-terminal domain of GyrB, which probably disrupts DNA binding by the gyrase. This is DNA gyrase inhibitor YacG from Colwellia psychrerythraea (strain 34H / ATCC BAA-681) (Vibrio psychroerythus).